Here is a 361-residue protein sequence, read N- to C-terminus: Phosphoserine aminotransferase (361 aa).

Residue arginine 43 participates in L-glutamate binding. Pyridoxal 5'-phosphate is bound by residues 77 to 78 (AS), tryptophan 103, threonine 153, aspartate 173, and glutamine 196. Lysine 197 is subject to N6-(pyridoxal phosphate)lysine. 238–239 (NT) is a binding site for pyridoxal 5'-phosphate.

This sequence belongs to the class-V pyridoxal-phosphate-dependent aminotransferase family. SerC subfamily. Homodimer. Requires pyridoxal 5'-phosphate as cofactor.

It is found in the cytoplasm. It carries out the reaction O-phospho-L-serine + 2-oxoglutarate = 3-phosphooxypyruvate + L-glutamate. It catalyses the reaction 4-(phosphooxy)-L-threonine + 2-oxoglutarate = (R)-3-hydroxy-2-oxo-4-phosphooxybutanoate + L-glutamate. Its pathway is amino-acid biosynthesis; L-serine biosynthesis; L-serine from 3-phospho-D-glycerate: step 2/3. It functions in the pathway cofactor biosynthesis; pyridoxine 5'-phosphate biosynthesis; pyridoxine 5'-phosphate from D-erythrose 4-phosphate: step 3/5. Functionally, catalyzes the reversible conversion of 3-phosphohydroxypyruvate to phosphoserine and of 3-hydroxy-2-oxo-4-phosphonooxybutanoate to phosphohydroxythreonine. This is Phosphoserine aminotransferase from Pseudomonas syringae pv. tomato (strain ATCC BAA-871 / DC3000).